The sequence spans 59 residues: Small, acid-soluble spore protein H (59 aa).

Belongs to the SspH family.

It localises to the spore core. This chain is Small, acid-soluble spore protein H, found in Bacillus licheniformis (strain ATCC 14580 / DSM 13 / JCM 2505 / CCUG 7422 / NBRC 12200 / NCIMB 9375 / NCTC 10341 / NRRL NRS-1264 / Gibson 46).